We begin with the raw amino-acid sequence, 73 residues long: Cell division protein ZapB (73 aa).

Residues 3–67 are a coiled coil; that stretch reads LELLSKLETK…WNDKVTGLVG (65 aa).

Belongs to the ZapB family. As to quaternary structure, homodimer. The ends of the coiled-coil dimer bind to each other, forming polymers. Interacts with FtsZ.

Its subcellular location is the cytoplasm. In terms of biological role, non-essential, abundant cell division factor that is required for proper Z-ring formation. It is recruited early to the divisome by direct interaction with FtsZ, stimulating Z-ring assembly and thereby promoting cell division earlier in the cell cycle. Its recruitment to the Z-ring requires functional FtsA or ZipA. The polypeptide is Cell division protein ZapB (Shewanella sp. (strain MR-4)).